Here is a 467-residue protein sequence, read N- to C-terminus: Ribulose bisphosphate carboxylase large chain (467 aa).

N6,N6,N6-trimethyllysine is present on Lys5. The substrate site is built by Asn114 and Thr164. Residue Lys166 is the Proton acceptor of the active site. Residue Lys168 participates in substrate binding. 3 residues coordinate Mg(2+): Lys192, Asp194, and Glu195. Lys192 is modified (N6-carboxylysine). His285 serves as the catalytic Proton acceptor. Substrate-binding residues include Arg286, His318, and Ser370.

This sequence belongs to the RuBisCO large chain family. Type I subfamily. As to quaternary structure, heterohexadecamer of 8 large chains and 8 small chains; disulfide-linked. The disulfide link is formed within the large subunit homodimers. Mg(2+) is required as a cofactor. The disulfide bond which can form in the large chain dimeric partners within the hexadecamer appears to be associated with oxidative stress and protein turnover.

Its subcellular location is the plastid. It is found in the chloroplast. It carries out the reaction 2 (2R)-3-phosphoglycerate + 2 H(+) = D-ribulose 1,5-bisphosphate + CO2 + H2O. The enzyme catalyses D-ribulose 1,5-bisphosphate + O2 = 2-phosphoglycolate + (2R)-3-phosphoglycerate + 2 H(+). RuBisCO catalyzes two reactions: the carboxylation of D-ribulose 1,5-bisphosphate, the primary event in carbon dioxide fixation, as well as the oxidative fragmentation of the pentose substrate in the photorespiration process. Both reactions occur simultaneously and in competition at the same active site. This is Ribulose bisphosphate carboxylase large chain from Tasmannia insipida (Pepperbush).